The primary structure comprises 378 residues: Alcohol dehydrogenase 1 (378 aa).

Residue C48 participates in Zn(2+) binding. 49 to 53 (HTDVL) serves as a coordination point for NAD(+). H69, C99, C102, C105, C113, and C177 together coordinate Zn(2+). NAD(+) is bound by residues 202-207 (GIGTVG), D226, K231, 274-276 (TGV), 297-299 (IGA), and 321-323 (TTF).

This sequence belongs to the zinc-containing alcohol dehydrogenase family. Class-IV subfamily. Homodimer. Zn(2+) is required as a cofactor. Expressed in flowers and disk florets.

It participates in isoprenoid biosynthesis. In Tanacetum cinerariifolium (Dalmatian daisy), this protein is Alcohol dehydrogenase 1.